Here is a 430-residue protein sequence, read N- to C-terminus: Serine--tRNA ligase (430 aa).

Position 237 to 239 (237 to 239) interacts with L-serine; sequence TAE. 268–270 contacts ATP; it reads RSE. E291 lines the L-serine pocket. 355 to 358 provides a ligand contact to ATP; that stretch reads EISS. S391 is an L-serine binding site.

Belongs to the class-II aminoacyl-tRNA synthetase family. Type-1 seryl-tRNA synthetase subfamily. As to quaternary structure, homodimer. The tRNA molecule binds across the dimer.

It is found in the cytoplasm. The catalysed reaction is tRNA(Ser) + L-serine + ATP = L-seryl-tRNA(Ser) + AMP + diphosphate + H(+). It catalyses the reaction tRNA(Sec) + L-serine + ATP = L-seryl-tRNA(Sec) + AMP + diphosphate + H(+). It participates in aminoacyl-tRNA biosynthesis; selenocysteinyl-tRNA(Sec) biosynthesis; L-seryl-tRNA(Sec) from L-serine and tRNA(Sec): step 1/1. Catalyzes the attachment of serine to tRNA(Ser). Is also able to aminoacylate tRNA(Sec) with serine, to form the misacylated tRNA L-seryl-tRNA(Sec), which will be further converted into selenocysteinyl-tRNA(Sec). This Citrobacter koseri (strain ATCC BAA-895 / CDC 4225-83 / SGSC4696) protein is Serine--tRNA ligase.